The following is a 132-amino-acid chain: Small ribosomal subunit protein uS8c (132 aa).

The protein belongs to the universal ribosomal protein uS8 family. In terms of assembly, part of the 30S ribosomal subunit.

The protein localises to the plastid. Its subcellular location is the chloroplast. Its function is as follows. One of the primary rRNA binding proteins, it binds directly to 16S rRNA central domain where it helps coordinate assembly of the platform of the 30S subunit. In Illicium oligandrum (Star anise), this protein is Small ribosomal subunit protein uS8c (rps8).